The primary structure comprises 630 residues: uncharacterized protein (630 aa).

Transmembrane regions (helical) follow at residues 254–274, 504–524, 564–584, and 601–621; these read MFYA…ELRV, IALL…LTSI, MIFA…SMVF, and IIVI…AVLF.

The protein resides in the cell membrane. This is an uncharacterized protein from Mycoplasma genitalium (strain ATCC 33530 / DSM 19775 / NCTC 10195 / G37) (Mycoplasmoides genitalium).